We begin with the raw amino-acid sequence, 274 residues long: Nitrogenase iron protein (274 aa).

8–15 (GKGGIGKS) is an ATP binding site. C94 contributes to the [4Fe-4S] cluster binding site. An ADP-ribosylarginine; by dinitrogenase reductase ADP-ribosyltransferase modification is found at R97. C131 contributes to the [4Fe-4S] cluster binding site.

This sequence belongs to the NifH/BchL/ChlL family. Homodimer. Requires [4Fe-4S] cluster as cofactor. In terms of processing, the reversible ADP-ribosylation of Arg-97 inactivates the nitrogenase reductase and regulates nitrogenase activity.

It catalyses the reaction N2 + 8 reduced [2Fe-2S]-[ferredoxin] + 16 ATP + 16 H2O = H2 + 8 oxidized [2Fe-2S]-[ferredoxin] + 2 NH4(+) + 16 ADP + 16 phosphate + 6 H(+). The key enzymatic reactions in nitrogen fixation are catalyzed by the nitrogenase complex, which has 2 components: the iron protein and the molybdenum-iron protein. The chain is Nitrogenase iron protein from Chlorobium phaeobacteroides (strain BS1).